We begin with the raw amino-acid sequence, 617 residues long: Chaperone protein HscA homolog (617 aa).

The protein belongs to the heat shock protein 70 family.

Probable chaperone. Has a low intrinsic ATPase activity which is markedly stimulated by HscB. This Vibrio parahaemolyticus serotype O3:K6 (strain RIMD 2210633) protein is Chaperone protein HscA homolog.